A 210-amino-acid polypeptide reads, in one-letter code: Orotate phosphoribosyltransferase (210 aa).

5-phospho-alpha-D-ribose 1-diphosphate is bound by residues arginine 96, lysine 100, histidine 102, and 122–130 (DDLISTGGS). Serine 126 is a binding site for orotate.

It belongs to the purine/pyrimidine phosphoribosyltransferase family. PyrE subfamily. Homodimer. Mg(2+) serves as cofactor.

It carries out the reaction orotidine 5'-phosphate + diphosphate = orotate + 5-phospho-alpha-D-ribose 1-diphosphate. The protein operates within pyrimidine metabolism; UMP biosynthesis via de novo pathway; UMP from orotate: step 1/2. Catalyzes the transfer of a ribosyl phosphate group from 5-phosphoribose 1-diphosphate to orotate, leading to the formation of orotidine monophosphate (OMP). This is Orotate phosphoribosyltransferase from Levilactobacillus brevis (strain ATCC 367 / BCRC 12310 / CIP 105137 / JCM 1170 / LMG 11437 / NCIMB 947 / NCTC 947) (Lactobacillus brevis).